The sequence spans 1257 residues: Protein flightless-1 homolog (1257 aa).

LRR repeat units lie at residues 6–31 (LQFV…VEQM), 32–54 (TQMT…LSRC), 56–77 (NLEH…LSDL), 78–102 (PRLR…IFRM), 103–126 (KDLT…EYAK), 128–148 (SIVL…VCAN), 149–172 (LIDL…IRRL), 174–195 (MLQS…QLPS), 197–221 (TSLS…LDDM), 222–244 (HNLR…LFKL), 246–267 (NLRK…EGEW), 268–290 (ENLE…VVKL), 292–315 (RLTK…IGKL), 316–338 (IQLT…ISRC), 339–361 (VKLQ…IHLL), and 363–384 (DLKV…PNDA). 4 Gelsolin-like repeats span residues 523–600 (MDEA…EEFL), 640–714 (AVEM…PEFW), 759–832 (ELPK…MMFR), and 1168–1243 (EKTV…CRFR).

The protein belongs to the villin/gelsolin family.

May play a key role in embryonic cellularization by interacting with both the cytoskeleton and other cellular components. This is Protein flightless-1 homolog (fli-1) from Caenorhabditis elegans.